Consider the following 320-residue polypeptide: Cytochrome f (320 aa).

An N-terminal signal peptide occupies residues 1 to 35 (MENRNTFSWVKEQMTRSISVSIMIYVITQTSISNA). Residues Tyr-36, Cys-56, Cys-59, and His-60 each contribute to the heme site. A helical transmembrane segment spans residues 286–306 (VQGLLFFFASVILAQVFLVLK).

This sequence belongs to the cytochrome f family. In terms of assembly, the 4 large subunits of the cytochrome b6-f complex are cytochrome b6, subunit IV (17 kDa polypeptide, petD), cytochrome f and the Rieske protein, while the 4 small subunits are PetG, PetL, PetM and PetN. The complex functions as a dimer. Heme serves as cofactor.

The protein resides in the plastid. Its subcellular location is the chloroplast thylakoid membrane. Its function is as follows. Component of the cytochrome b6-f complex, which mediates electron transfer between photosystem II (PSII) and photosystem I (PSI), cyclic electron flow around PSI, and state transitions. This is Cytochrome f from Agrostis stolonifera (Creeping bentgrass).